The following is a 179-amino-acid chain: Inner membrane-spanning protein YciB (179 aa).

The next 5 membrane-spanning stretches (helical) occupy residues 22 to 42 (IYAATAALIVATAIVLIYSWV), 50 to 70 (MALITFVLVVVFGGLTLFFHN), 76 to 96 (WKVTVIYALFAGALLVSQWVM), 121 to 141 (LAWAVFFILCGLANIYIAFWL), and 149 to 169 (FKVFGLTALTLIFTLLSGIYI).

The protein belongs to the YciB family.

It is found in the cell inner membrane. Functionally, plays a role in cell envelope biogenesis, maintenance of cell envelope integrity and membrane homeostasis. This chain is Inner membrane-spanning protein YciB, found in Shigella boydii serotype 4 (strain Sb227).